A 314-amino-acid polypeptide reads, in one-letter code: MPIRIDKKLPAVEILRTENIFVMDDQRAAHQDIRPLKILILNLMPQKMVTETQLLRHLANTPLQLDIDFLYMESHRSKTTRSEHMETFYKTFPEVKDEYFDGMIITGAPVEHLPFEEVDYWEEFRQMLEWSKTHVYSTLHICWGAQAGLYLRYGVEKYQMDSKLSGIYPQDTLKEGHLLFRGFDDSYVSPHSRHTEISKEEVLNKTNLEILSEGPQVGVSILASRDLREIYSFGHLEYDRDTLAKEYFRDRDAGFDPHIPENYFKDDDVNQVPCLCWSSSAALFFSNWVDHAVYQETPFDWRKIEDDASAYGYL.

Cys142 serves as the catalytic Acyl-thioester intermediate. Substrate-binding residues include Lys163 and Ser192. The Proton acceptor role is filled by His235. Glu237 is a catalytic residue. Arg249 contacts substrate.

The protein belongs to the MetA family.

The protein localises to the cytoplasm. It carries out the reaction L-homoserine + acetyl-CoA = O-acetyl-L-homoserine + CoA. It participates in amino-acid biosynthesis; L-methionine biosynthesis via de novo pathway; O-acetyl-L-homoserine from L-homoserine: step 1/1. Its function is as follows. Transfers an acetyl group from acetyl-CoA to L-homoserine, forming acetyl-L-homoserine. The chain is Homoserine O-acetyltransferase from Streptococcus pneumoniae serotype 4 (strain ATCC BAA-334 / TIGR4).